The following is a 212-amino-acid chain: Thymidylate kinase (212 aa).

Residue 11 to 18 (GPEGAGKT) coordinates ATP.

This sequence belongs to the thymidylate kinase family.

The enzyme catalyses dTMP + ATP = dTDP + ADP. Functionally, phosphorylation of dTMP to form dTDP in both de novo and salvage pathways of dTTP synthesis. This Streptococcus pneumoniae serotype 2 (strain D39 / NCTC 7466) protein is Thymidylate kinase.